Here is a 347-residue protein sequence, read N- to C-terminus: GMP reductase (347 aa).

108–131 (ADFEKTVQILALNPALNFVCIDVA) provides a ligand contact to NADP(+). Positions 181 and 183 each coordinate K(+). The Thioimidate intermediate role is filled by Cys186. Position 216-239 (216-239 (IVSDGGCTMPGDVAKAFGGGADFV)) interacts with NADP(+).

It belongs to the IMPDH/GMPR family. GuaC type 1 subfamily. Homotetramer.

The enzyme catalyses IMP + NH4(+) + NADP(+) = GMP + NADPH + 2 H(+). Functionally, catalyzes the irreversible NADPH-dependent deamination of GMP to IMP. It functions in the conversion of nucleobase, nucleoside and nucleotide derivatives of G to A nucleotides, and in maintaining the intracellular balance of A and G nucleotides. This chain is GMP reductase, found in Salmonella paratyphi C (strain RKS4594).